A 273-amino-acid chain; its full sequence is 4-hydroxy-tetrahydrodipicolinate reductase (273 aa).

Residues G12–M17 and E38 each bind NAD(+). Residue R39 participates in NADP(+) binding. Residues G102–T104 and A126–F129 each bind NAD(+). The active-site Proton donor/acceptor is H159. H160 serves as a coordination point for (S)-2,3,4,5-tetrahydrodipicolinate. The active-site Proton donor is K163. (S)-2,3,4,5-tetrahydrodipicolinate is bound at residue G169–T170.

This sequence belongs to the DapB family. As to quaternary structure, homotetramer.

The protein localises to the cytoplasm. The catalysed reaction is (S)-2,3,4,5-tetrahydrodipicolinate + NAD(+) + H2O = (2S,4S)-4-hydroxy-2,3,4,5-tetrahydrodipicolinate + NADH + H(+). It catalyses the reaction (S)-2,3,4,5-tetrahydrodipicolinate + NADP(+) + H2O = (2S,4S)-4-hydroxy-2,3,4,5-tetrahydrodipicolinate + NADPH + H(+). Its pathway is amino-acid biosynthesis; L-lysine biosynthesis via DAP pathway; (S)-tetrahydrodipicolinate from L-aspartate: step 4/4. In terms of biological role, catalyzes the conversion of 4-hydroxy-tetrahydrodipicolinate (HTPA) to tetrahydrodipicolinate. The chain is 4-hydroxy-tetrahydrodipicolinate reductase from Shigella boydii serotype 4 (strain Sb227).